The sequence spans 287 residues: Large ribosomal subunit protein uL2 (287 aa).

A disordered region spans residues 222 to 266 (RGIRPTVRGSAMNPNDHPHGGGEGRSPVGRDAPRTPWGKRHMGVK).

It belongs to the universal ribosomal protein uL2 family. In terms of assembly, part of the 50S ribosomal subunit. Forms a bridge to the 30S subunit in the 70S ribosome.

In terms of biological role, one of the primary rRNA binding proteins. Required for association of the 30S and 50S subunits to form the 70S ribosome, for tRNA binding and peptide bond formation. It has been suggested to have peptidyltransferase activity; this is somewhat controversial. Makes several contacts with the 16S rRNA in the 70S ribosome. This is Large ribosomal subunit protein uL2 from Mycoplasma pneumoniae (strain ATCC 29342 / M129 / Subtype 1) (Mycoplasmoides pneumoniae).